The primary structure comprises 223 residues: Phosphoribosylformylglycinamidine synthase subunit PurQ (223 aa).

Residues 2–223 form the Glutamine amidotransferase type-1 domain; sequence KFAVIQFPGS…ASVLKNFVGK (222 aa). The active-site Nucleophile is the Cys86. Residues His195 and Glu197 contribute to the active site.

In terms of assembly, part of the FGAM synthase complex composed of 1 PurL, 1 PurQ and 2 PurS subunits.

It is found in the cytoplasm. The catalysed reaction is N(2)-formyl-N(1)-(5-phospho-beta-D-ribosyl)glycinamide + L-glutamine + ATP + H2O = 2-formamido-N(1)-(5-O-phospho-beta-D-ribosyl)acetamidine + L-glutamate + ADP + phosphate + H(+). It carries out the reaction L-glutamine + H2O = L-glutamate + NH4(+). Its pathway is purine metabolism; IMP biosynthesis via de novo pathway; 5-amino-1-(5-phospho-D-ribosyl)imidazole from N(2)-formyl-N(1)-(5-phospho-D-ribosyl)glycinamide: step 1/2. Its function is as follows. Part of the phosphoribosylformylglycinamidine synthase complex involved in the purines biosynthetic pathway. Catalyzes the ATP-dependent conversion of formylglycinamide ribonucleotide (FGAR) and glutamine to yield formylglycinamidine ribonucleotide (FGAM) and glutamate. The FGAM synthase complex is composed of three subunits. PurQ produces an ammonia molecule by converting glutamine to glutamate. PurL transfers the ammonia molecule to FGAR to form FGAM in an ATP-dependent manner. PurS interacts with PurQ and PurL and is thought to assist in the transfer of the ammonia molecule from PurQ to PurL. This Lactococcus lactis subsp. lactis (strain IL1403) (Streptococcus lactis) protein is Phosphoribosylformylglycinamidine synthase subunit PurQ.